The sequence spans 307 residues: Transposase InsD for insertion element IS2-9 (307 aa).

In terms of domain architecture, Integrase catalytic spans 112 to 295 (KPAVPPSKRA…SPREYLRQRA (184 aa)).

Functionally, involved in the transposition of the insertion sequence IS2. The protein is Transposase InsD for insertion element IS2-9 of Escherichia coli (strain K12).